Reading from the N-terminus, the 364-residue chain is Ribosomal RNA large subunit methyltransferase M (364 aa).

Residues Ser198, 231 to 234 (APGG), Asp250, Asp270, and Asp286 each bind S-adenosyl-L-methionine. The active-site Proton acceptor is the Lys315.

This sequence belongs to the class I-like SAM-binding methyltransferase superfamily. RNA methyltransferase RlmE family. RlmM subfamily. In terms of assembly, monomer.

Its subcellular location is the cytoplasm. It carries out the reaction cytidine(2498) in 23S rRNA + S-adenosyl-L-methionine = 2'-O-methylcytidine(2498) in 23S rRNA + S-adenosyl-L-homocysteine + H(+). In terms of biological role, catalyzes the 2'-O-methylation at nucleotide C2498 in 23S rRNA. In Thauera aminoaromatica, this protein is Ribosomal RNA large subunit methyltransferase M.